Reading from the N-terminus, the 299-residue chain is Taste receptor type 2 member 5 (299 aa).

A topological domain (extracellular) is located at residue methionine 1. Residues 2 to 22 form a helical membrane-spanning segment; the sequence is LSAGLGLLMLVAVVEFLIGLI. Residues 23–45 lie on the Cytoplasmic side of the membrane; sequence GNGVLVVWSFREWMRKFNWSSYN. The chain crosses the membrane as a helical span at residues 46-66; it reads LIILGLAGCRFLLQWLIILDL. Residues 67–82 lie on the Extracellular side of the membrane; that stretch reads SLFPLFQSSRWLRYLS. Residues 83–103 traverse the membrane as a helical segment; it reads IFWVLVSQASLWFATFLSVFY. Residues 104–127 lie on the Cytoplasmic side of the membrane; it reads CKKITTFDRPAYLWLKQRAYNLSL. A helical membrane pass occupies residues 128-148; it reads WCLLGYFIINLLLTVQIGLMF. Residues 149 to 175 lie on the Extracellular side of the membrane; the sequence is YHPPQGNSSIRYPFESWQYLYAFRLNS. Asparagine 155 carries an N-linked (GlcNAc...) asparagine glycan. The chain crosses the membrane as a helical span at residues 176-196; the sequence is GSYLPLMVFLVSSGMLIVSLY. The Cytoplasmic portion of the chain corresponds to 197–223; the sequence is THHKKMKVHSAGRRDVRAKAHITALKS. A helical membrane pass occupies residues 224–244; sequence LGCFLFLHLVYIMASPFSITS. Residues 245 to 253 are Extracellular-facing; the sequence is KTYPPDLTS. A helical transmembrane segment spans residues 254–274; it reads VFIWETLMAAYPSLHSLILIM. Over 275–299 the chain is Cytoplasmic; that stretch reads GIPRVKQTCQKILWKTVCARRCWGP.

It belongs to the G-protein coupled receptor T2R family.

The protein localises to the membrane. Functionally, receptor that may play a role in the perception of bitterness and is gustducin-linked. May play a role in sensing the chemical composition of the gastrointestinal content. The activity of this receptor may stimulate alpha gustducin, mediate PLC-beta-2 activation and lead to the gating of TRPM5. In Gorilla gorilla gorilla (Western lowland gorilla), this protein is Taste receptor type 2 member 5 (TAS2R5).